Reading from the N-terminus, the 399-residue chain is MSQNLILVLNCGSSSIKFSVIDPKTEKKYISGIAECLKLKESSVKWKIDKSYHESSLNEYSDHNLALRFIVNEILQHKKDILKKIVGIGHRIVNGGIKCTKSTIIDEKILKNIKDSIPFAPLHNPAHLIGIYESFKIFPNLINKNVAVFDTAFHQTIPEDSYLYAIPYYFYKKYNIRRYGAHGISHSYVSKKASNILNIPIEKSNLITCHLGNGGSVSAILNGKCIDTSMGLTPLEGIVMGTRCGDIDPSIIFYLHEKLKISVKEIREIFSEKSGLLGLTNISSDFRYIEDNFLKNKIAKRAMKIYCNRLSKYIGAYITLLENKLDGIVFTGGIGENAYNMRELLINKLKILGFEINKEKNFKIRLGRSGIITNSNSIPALVIPTNEELVIAKESIIFT.

Residue N10 coordinates Mg(2+). Residue K17 participates in ATP binding. R91 contributes to the substrate binding site. Catalysis depends on D150, which acts as the Proton donor/acceptor. ATP is bound by residues 210 to 214, 285 to 287, and 333 to 337; these read HLGNG, DFR, and GIGEN. E387 is a binding site for Mg(2+).

Belongs to the acetokinase family. Homodimer. It depends on Mg(2+) as a cofactor. Requires Mn(2+) as cofactor.

The protein resides in the cytoplasm. It carries out the reaction acetate + ATP = acetyl phosphate + ADP. It participates in metabolic intermediate biosynthesis; acetyl-CoA biosynthesis; acetyl-CoA from acetate: step 1/2. In terms of biological role, catalyzes the formation of acetyl phosphate from acetate and ATP. Can also catalyze the reverse reaction. This Wigglesworthia glossinidia brevipalpis protein is Acetate kinase.